Here is a 131-residue protein sequence, read N- to C-terminus: Interleukin-13 (131 aa).

An N-terminal signal peptide occupies residues 1–18; the sequence is MALWVTAVLALACLGGLA. Asparagine 42, asparagine 52, and asparagine 75 each carry an N-linked (GlcNAc...) asparagine glycan. Intrachain disulfides connect cysteine 51/cysteine 79 and cysteine 67/cysteine 93.

The protein belongs to the IL-4/IL-13 family. In terms of assembly, interacts with IL13RA2.

Its subcellular location is the secreted. In terms of biological role, cytokine that plays important roles in allergic inflammation and immune response to parasite infection. Synergizes with IL2 in regulating interferon-gamma synthesis. Stimulates B-cell proliferation, and activation of eosinophils, basophils, and mast cells. Plays an important role in controlling IL33 activity by modulating the production of transmembrane and soluble forms of interleukin-1 receptor-like 1/IL1RL1. Displays the capacity to antagonize Th1-driven proinflammatory immune response and downregulates synthesis of many proinflammatory cytokines including IL1, IL6, IL10, IL12 and TNF-alpha through a mechanism that partially involves suppression of NF-kappa-B. Also functions on nonhematopoietic cells, including endothelial cells where it induces vascular cell adhesion protein 1/VCAM1, which is important in the recruitment of eosinophils. Exerts its biological effects through its receptors which comprises the IL4R chain and the IL13RA1 chain, to activate JAK1 and TYK2, leading to the activation of STAT6. Aside from IL13RA1, another receptor IL13RA2 acts as a high affinity decoy for IL13 and mediates internalization and depletion of extracellular IL13. This is Interleukin-13 (Il13) from Mus musculus (Mouse).